Here is a 141-residue protein sequence, read N- to C-terminus: Hemoglobin subunit alpha (141 aa).

The Globin domain maps to 1-141; that stretch reads VLSPADKTNI…VSTVLVSKYR (141 aa). A Phosphoserine modification is found at Ser-3. Lys-7 bears the N6-succinyllysine mark. Thr-8 is modified (phosphothreonine). Lys-11 carries the N6-succinyllysine modification. The residue at position 16 (Lys-16) is an N6-acetyllysine; alternate. Lys-16 carries the N6-succinyllysine; alternate modification. Tyr-24 is subject to Phosphotyrosine. Position 35 is a phosphoserine (Ser-35). N6-succinyllysine is present on Lys-40. The residue at position 49 (Ser-49) is a Phosphoserine. Position 58 (His-58) interacts with O2. His-87 contributes to the heme b binding site. Ser-102 is subject to Phosphoserine. Phosphothreonine is present on Thr-108. 2 positions are modified to phosphoserine: Ser-124 and Ser-131. The residue at position 134 (Thr-134) is a Phosphothreonine. Ser-138 is subject to Phosphoserine.

This sequence belongs to the globin family. As to quaternary structure, heterotetramer of two alpha chains and two beta chains. In terms of tissue distribution, red blood cells.

Involved in oxygen transport from the lung to the various peripheral tissues. Functionally, hemopressin acts as an antagonist peptide of the cannabinoid receptor CNR1. Hemopressin-binding efficiently blocks cannabinoid receptor CNR1 and subsequent signaling. This Myotis velifer (Mouse-eared bat) protein is Hemoglobin subunit alpha (HBA).